The sequence spans 360 residues: Phospho-N-acetylmuramoyl-pentapeptide-transferase (360 aa).

Helical transmembrane passes span 20–40 (YITF…FFFG), 71–91 (TPTM…LLWA), 93–113 (LDNG…AIGF), 134–154 (LLIG…LHPA), 168–188 (ALIN…LGAA), 199–219 (GLAI…AYMV), 239–259 (LAVF…YNAP), 263–283 (VFMG…IAVV), 288–308 (IVLA…IIQV), and 337–357 (QIVI…LATL).

Belongs to the glycosyltransferase 4 family. MraY subfamily. Mg(2+) is required as a cofactor.

It localises to the cell inner membrane. It catalyses the reaction UDP-N-acetyl-alpha-D-muramoyl-L-alanyl-gamma-D-glutamyl-meso-2,6-diaminopimeloyl-D-alanyl-D-alanine + di-trans,octa-cis-undecaprenyl phosphate = di-trans,octa-cis-undecaprenyl diphospho-N-acetyl-alpha-D-muramoyl-L-alanyl-D-glutamyl-meso-2,6-diaminopimeloyl-D-alanyl-D-alanine + UMP. Its pathway is cell wall biogenesis; peptidoglycan biosynthesis. Catalyzes the initial step of the lipid cycle reactions in the biosynthesis of the cell wall peptidoglycan: transfers peptidoglycan precursor phospho-MurNAc-pentapeptide from UDP-MurNAc-pentapeptide onto the lipid carrier undecaprenyl phosphate, yielding undecaprenyl-pyrophosphoryl-MurNAc-pentapeptide, known as lipid I. In Paracoccus denitrificans (strain Pd 1222), this protein is Phospho-N-acetylmuramoyl-pentapeptide-transferase.